A 437-amino-acid polypeptide reads, in one-letter code: Ribosomal protein uS12 methylthiotransferase RimO (437 aa).

Residues 3-118 (KKFYITTLGC…AGKILREKFP (116 aa)) form the MTTase N-terminal domain. The [4Fe-4S] cluster site is built by cysteine 12, cysteine 48, cysteine 81, cysteine 157, cysteine 161, and cysteine 164. The region spanning 143-370 (NYSKPYAYVK…RDSHLEILEE (228 aa)) is the Radical SAM core domain. One can recognise a TRAM domain in the interval 373-437 (ESRIGRTYDA…YEYDMNGTWV (65 aa)).

Belongs to the methylthiotransferase family. RimO subfamily. [4Fe-4S] cluster serves as cofactor.

The protein localises to the cytoplasm. It carries out the reaction L-aspartate(89)-[ribosomal protein uS12]-hydrogen + (sulfur carrier)-SH + AH2 + 2 S-adenosyl-L-methionine = 3-methylsulfanyl-L-aspartate(89)-[ribosomal protein uS12]-hydrogen + (sulfur carrier)-H + 5'-deoxyadenosine + L-methionine + A + S-adenosyl-L-homocysteine + 2 H(+). Catalyzes the methylthiolation of an aspartic acid residue of ribosomal protein uS12. This chain is Ribosomal protein uS12 methylthiotransferase RimO, found in Leptospira interrogans serogroup Icterohaemorrhagiae serovar copenhageni (strain Fiocruz L1-130).